The primary structure comprises 466 residues: Cytochrome c-552 (466 aa).

Positions 1 to 27 (MVRILTKKSFALSALVAASLMASGAMA) are cleaved as a signal peptide. His87 serves as a coordination point for heme c. Heme contacts are provided by Cys115, Cys118, and Lys119. Heme c-binding residues include Cys153, Cys156, His157, Cys195, Cys198, and His199. 4 residues coordinate Ca(2+): Glu201, Tyr202, Lys250, and Gln252. Tyr202 provides a ligand contact to substrate. His253 contacts substrate. Heme c-binding residues include His264, Cys271, Cys274, His275, His290, Cys303, Cys306, His307, and His382.

This sequence belongs to the cytochrome c-552 family. Requires Ca(2+) as cofactor. The cofactor is heme c.

The protein localises to the periplasm. It catalyses the reaction 6 Fe(III)-[cytochrome c] + NH4(+) + 2 H2O = 6 Fe(II)-[cytochrome c] + nitrite + 8 H(+). Its pathway is nitrogen metabolism; nitrate reduction (assimilation). Its function is as follows. Catalyzes the reduction of nitrite to ammonia, consuming six electrons in the process. This Shewanella woodyi (strain ATCC 51908 / MS32) protein is Cytochrome c-552.